A 342-amino-acid chain; its full sequence is Photosystem II assembly lipoprotein Ycf48 (342 aa).

Residues 1-28 (MPVKFPSLKFEQLKQLVLVAAIAVFCVS) form the signal peptide. The N-palmitoyl cysteine moiety is linked to residue Cys-29. Cys-29 is lipidated: S-diacylglycerol cysteine. An Arg-rich patch motif is present at residues 196-220 (RGNFYSTWAPGQTEWTPHNRNSSRR). The propeptide occupies 340-342 (MVP).

The protein belongs to the Ycf48 family. Part of early PSII assembly complexes which includes D1 (psbA) and PsbI; not found in mature PSII. By two-hybrid analysis in yeast interacts with precursor and intermediate forms of D1, but less with mature D1. Binds to the lumenal side of PSI and PSII complexes. Coimmunoprecipitates with YidC. Purified chlorophyll- and carotenoid-containing photosystem II (PSII) assembly intermediate complex RCII* (iD1, D1, D2, PsbE, PsbF, PsbI, Ycf39, Ycf48, HliC and HliD). In terms of processing, the last 3 residues are removed in the mature protein.

It localises to the cellular thylakoid membrane. Functionally, a factor required for optimal assembly of photosystem II (PSII) which acts in the early stages of PSII assembly. Also plays a role in replacement of photodamaged D1 (psbA). May interact with precursor D1 to prevent its premature processing before association with D2 (psbD). May also play a role in chlorophyll insertion into chlorophyll-binding proteins. Increasing levels of chlorophyll precursors partially suppresses deletion of this protein, supporting the idea that Ycf48 assists YidC in synthesis of chlorophyll-binding proteins. The Ycf39-Hlip complex binds D1 at an early stage of PSII assembly along with Ycf48, ribosomes and ChlG, the last enzyme in chlorophyll biosynthesis; it may be involved in chlorophyll reuse and delivery to D1 in the initial stages of PSII assembly. In Synechocystis sp. (strain ATCC 27184 / PCC 6803 / Kazusa), this protein is Photosystem II assembly lipoprotein Ycf48.